A 624-amino-acid polypeptide reads, in one-letter code: DNA-directed RNA polymerase subunit gamma (624 aa).

Positions 70, 72, 85, and 88 each coordinate Zn(2+). Mg(2+) is bound by residues Asp466, Asp468, and Asp470.

The protein belongs to the RNA polymerase beta' chain family. RpoC1 subfamily. In cyanobacteria the RNAP catalytic core is composed of 2 alpha, 1 beta, 1 beta', 1 gamma and 1 omega subunit. When a sigma factor is associated with the core the holoenzyme is formed, which can initiate transcription. It depends on Mg(2+) as a cofactor. The cofactor is Zn(2+).

The catalysed reaction is RNA(n) + a ribonucleoside 5'-triphosphate = RNA(n+1) + diphosphate. In terms of biological role, DNA-dependent RNA polymerase catalyzes the transcription of DNA into RNA using the four ribonucleoside triphosphates as substrates. The chain is DNA-directed RNA polymerase subunit gamma from Synechococcus sp. (strain ATCC 27144 / PCC 6301 / SAUG 1402/1) (Anacystis nidulans).